The sequence spans 402 residues: Argininosuccinate synthase (402 aa).

ATP is bound by residues 10-18 and Ala38; that span reads AYSGGVDTS. Tyr89 contributes to the L-citrulline binding site. Gly119 contributes to the ATP binding site. Thr121, Asn125, and Asp126 together coordinate L-aspartate. Asn125 is a binding site for L-citrulline. Residues Arg129, Ser177, Ser186, Glu262, and Tyr274 each contribute to the L-citrulline site.

The protein belongs to the argininosuccinate synthase family. Type 1 subfamily. Homotetramer.

The protein localises to the cytoplasm. The catalysed reaction is L-citrulline + L-aspartate + ATP = 2-(N(omega)-L-arginino)succinate + AMP + diphosphate + H(+). The protein operates within amino-acid biosynthesis; L-arginine biosynthesis; L-arginine from L-ornithine and carbamoyl phosphate: step 2/3. The sequence is that of Argininosuccinate synthase from Prochlorococcus marinus (strain SARG / CCMP1375 / SS120).